Reading from the N-terminus, the 271-residue chain is Type III pantothenate kinase (271 aa).

6 to 13 (DVRNTHTV) serves as a coordination point for ATP. Position 109–112 (109–112 (GADR)) interacts with substrate. The Proton acceptor role is filled by D111. D131 is a K(+) binding site. S134 is an ATP binding site. Position 186 (T186) interacts with substrate.

Belongs to the type III pantothenate kinase family. Homodimer. NH4(+) is required as a cofactor. K(+) serves as cofactor.

The protein localises to the cytoplasm. The enzyme catalyses (R)-pantothenate + ATP = (R)-4'-phosphopantothenate + ADP + H(+). The protein operates within cofactor biosynthesis; coenzyme A biosynthesis; CoA from (R)-pantothenate: step 1/5. In terms of biological role, catalyzes the phosphorylation of pantothenate (Pan), the first step in CoA biosynthesis. The polypeptide is Type III pantothenate kinase (Mycobacterium avium (strain 104)).